Here is a 194-residue protein sequence, read N- to C-terminus: Large ribosomal subunit protein eL15 (194 aa).

The interval 168 to 194 (RSRGLLNKGKGAEKVRPSIRAHQGKGK) is disordered. Residues 184–194 (PSIRAHQGKGK) show a composition bias toward basic residues.

The protein belongs to the eukaryotic ribosomal protein eL15 family. In terms of assembly, part of the 50S ribosomal subunit.

The polypeptide is Large ribosomal subunit protein eL15 (Thermococcus kodakarensis (strain ATCC BAA-918 / JCM 12380 / KOD1) (Pyrococcus kodakaraensis (strain KOD1))).